Consider the following 546-residue polypeptide: ATP synthase subunit alpha (546 aa).

Position 172–179 (172–179 (GDRKTGKT)) interacts with ATP. Polar residues-rich tracts occupy residues 511–520 (FRTTEGNNLG) and 536–546 (TELNVSRKTAK). The interval 511 to 546 (FRTTEGNNLGTEAPVDPLAADDVNKTELNVSRKTAK) is disordered.

Belongs to the ATPase alpha/beta chains family. In terms of assembly, F-type ATPases have 2 components, CF(1) - the catalytic core - and CF(0) - the membrane proton channel. CF(1) has five subunits: alpha(3), beta(3), gamma(1), delta(1), epsilon(1). CF(0) has three main subunits: a(1), b(2) and c(9-12). The alpha and beta chains form an alternating ring which encloses part of the gamma chain. CF(1) is attached to CF(0) by a central stalk formed by the gamma and epsilon chains, while a peripheral stalk is formed by the delta and b chains.

It localises to the cell membrane. It catalyses the reaction ATP + H2O + 4 H(+)(in) = ADP + phosphate + 5 H(+)(out). Functionally, produces ATP from ADP in the presence of a proton gradient across the membrane. The alpha chain is a regulatory subunit. In Corynebacterium aurimucosum (strain ATCC 700975 / DSM 44827 / CIP 107346 / CN-1) (Corynebacterium nigricans), this protein is ATP synthase subunit alpha.